The following is a 216-amino-acid chain: Transmembrane emp24 domain-containing protein eca (216 aa).

Residues 1 to 20 form the signal peptide; it reads MRDQFISLALILCVLHSACG. Topologically, residues 21-182 are lumenal; it reads LYFHISETER…FRHTSESTNS (162 aa). The 97-residue stretch at 30 to 126 folds into the GOLD domain; the sequence is RKCFIEEVPD…QLRVHLDIQV (97 aa). Residues 134–164 are a coiled coil; it reads AHVAQKEKLTELQLRIRQLLDQVEQITKEQN. The helical transmembrane segment at 183–203 threads the bilayer; it reads RVLWWSLAQTVVLVCMGFWQM. Residues 204 to 216 lie on the Cytoplasmic side of the membrane; the sequence is RHLKSFFEAKKLV. A Prevents secretion from ER motif is present at residues 213–216; that stretch reads KKLV.

The protein belongs to the EMP24/GP25L family.

The protein resides in the endoplasmic reticulum membrane. Eca and bai are essential, though not redundant, for dorsoventral patterning of the embryo. Specifically required during early embryogenesis for the activity of maternal tkv, while the zygotic tkv is not affected. Involved in Golgi organization. The sequence is that of Transmembrane emp24 domain-containing protein eca from Drosophila melanogaster (Fruit fly).